A 118-amino-acid polypeptide reads, in one-letter code: Large ribosomal subunit protein bL20 (118 aa).

Belongs to the bacterial ribosomal protein bL20 family.

In terms of biological role, binds directly to 23S ribosomal RNA and is necessary for the in vitro assembly process of the 50S ribosomal subunit. It is not involved in the protein synthesizing functions of that subunit. The sequence is that of Large ribosomal subunit protein bL20 from Bacillus mycoides (strain KBAB4) (Bacillus weihenstephanensis).